A 505-amino-acid chain; its full sequence is Lysine--tRNA ligase (505 aa).

Positions 415 and 422 each coordinate Mg(2+).

Belongs to the class-II aminoacyl-tRNA synthetase family. In terms of assembly, homodimer. It depends on Mg(2+) as a cofactor.

The protein resides in the cytoplasm. The enzyme catalyses tRNA(Lys) + L-lysine + ATP = L-lysyl-tRNA(Lys) + AMP + diphosphate. This chain is Lysine--tRNA ligase, found in Xanthomonas axonopodis pv. citri (strain 306).